The following is a 288-amino-acid chain: Proteasome assembly chaperone 1 (288 aa).

The tract at residues 1-33 (MATFFGEVQSVFSRAVDEEEEDEDDDEEEEEDR) is disordered. Acidic residues predominate over residues 17–33 (DEEEEDEDDDEEEEEDR).

The protein belongs to the PSMG1 family. In terms of assembly, forms a heterodimer with psmg2. Post-translationally, degraded by the proteasome upon completion of 20S proteasome maturation.

It is found in the cytoplasm. It localises to the endoplasmic reticulum. Chaperone protein which promotes assembly of the 20S proteasome as part of a heterodimer with psmg2. The chain is Proteasome assembly chaperone 1 from Xenopus laevis (African clawed frog).